A 495-amino-acid chain; its full sequence is Histidine--tRNA ligase (495 aa).

This sequence belongs to the class-II aminoacyl-tRNA synthetase family. As to quaternary structure, homodimer.

It localises to the cytoplasm. The catalysed reaction is tRNA(His) + L-histidine + ATP = L-histidyl-tRNA(His) + AMP + diphosphate + H(+). The chain is Histidine--tRNA ligase from Ruegeria pomeroyi (strain ATCC 700808 / DSM 15171 / DSS-3) (Silicibacter pomeroyi).